The primary structure comprises 37 residues: Large ribosomal subunit protein bL36 (37 aa).

The protein belongs to the bacterial ribosomal protein bL36 family.

The protein is Large ribosomal subunit protein bL36 of Halothermothrix orenii (strain H 168 / OCM 544 / DSM 9562).